A 462-amino-acid polypeptide reads, in one-letter code: ATP synthase subunit beta (462 aa).

151–158 (GGAGVGKT) provides a ligand contact to ATP.

It belongs to the ATPase alpha/beta chains family. In terms of assembly, F-type ATPases have 2 components, CF(1) - the catalytic core - and CF(0) - the membrane proton channel. CF(1) has five subunits: alpha(3), beta(3), gamma(1), delta(1), epsilon(1). CF(0) has four main subunits: a(1), b(1), b'(1) and c(9-12).

Its subcellular location is the cell inner membrane. It catalyses the reaction ATP + H2O + 4 H(+)(in) = ADP + phosphate + 5 H(+)(out). Functionally, produces ATP from ADP in the presence of a proton gradient across the membrane. The catalytic sites are hosted primarily by the beta subunits. The protein is ATP synthase subunit beta of Chlorobium chlorochromatii (strain CaD3).